The primary structure comprises 265 residues: 1-(5-phosphoribosyl)-5-[(5-phosphoribosylamino)methylideneamino] imidazole-4-carboxamide isomerase (265 aa).

D8 serves as the catalytic Proton acceptor. The Proton donor role is filled by D139.

The protein belongs to the HisA/HisF family.

The protein localises to the cytoplasm. The enzyme catalyses 1-(5-phospho-beta-D-ribosyl)-5-[(5-phospho-beta-D-ribosylamino)methylideneamino]imidazole-4-carboxamide = 5-[(5-phospho-1-deoxy-D-ribulos-1-ylimino)methylamino]-1-(5-phospho-beta-D-ribosyl)imidazole-4-carboxamide. The protein operates within amino-acid biosynthesis; L-histidine biosynthesis; L-histidine from 5-phospho-alpha-D-ribose 1-diphosphate: step 4/9. This Herminiimonas arsenicoxydans protein is 1-(5-phosphoribosyl)-5-[(5-phosphoribosylamino)methylideneamino] imidazole-4-carboxamide isomerase.